A 49-amino-acid chain; its full sequence is Feruloyl esterase A (49 aa).

It belongs to the AB hydrolase superfamily. FaeA family.

Its subcellular location is the secreted. The enzyme catalyses feruloyl-polysaccharide + H2O = ferulate + polysaccharide.. Involved in degradation of plant cell walls. Hydrolyzes the feruloyl-arabinose ester bond in arabinoxylans as well as the feruloyl-galactose and feruloyl-arabinose ester bonds in pectin. Active against methyl esters of sinapate (MSA), but not caffeate (MCA). This Talaromyces stipitatus (strain ATCC 10500 / CBS 375.48 / QM 6759 / NRRL 1006) (Penicillium stipitatum) protein is Feruloyl esterase A.